Here is a 474-residue protein sequence, read N- to C-terminus: UDP-N-acetylmuramate--L-alanine ligase (474 aa).

112–118 (GTHGKTT) contributes to the ATP binding site.

Belongs to the MurCDEF family.

The protein localises to the cytoplasm. The catalysed reaction is UDP-N-acetyl-alpha-D-muramate + L-alanine + ATP = UDP-N-acetyl-alpha-D-muramoyl-L-alanine + ADP + phosphate + H(+). Its pathway is cell wall biogenesis; peptidoglycan biosynthesis. In terms of biological role, cell wall formation. The chain is UDP-N-acetylmuramate--L-alanine ligase from Cupriavidus taiwanensis (strain DSM 17343 / BCRC 17206 / CCUG 44338 / CIP 107171 / LMG 19424 / R1) (Ralstonia taiwanensis (strain LMG 19424)).